Reading from the N-terminus, the 427-residue chain is Acetyl-CoA acetyltransferase, mitochondrial (427 aa).

The N-terminal 33 residues, 1-33, are a transit peptide targeting the mitochondrion; sequence MAVLAALLRSGARSRSPLLRRLVQEIRYVERSY. K66 carries the N6-acetyllysine; alternate modification. An N6-succinyllysine; alternate modification is found at K66. K78 bears the N6-succinyllysine mark. The active-site Acyl-thioester intermediate is the C126. An N6-acetyllysine; alternate mark is found at K174, K181, K190, and K202. K174, K181, K190, and K202 each carry N6-succinyllysine; alternate. Y219 provides a ligand contact to CoA. Y219 contributes to the K(+) binding site. K223 and K230 each carry N6-acetyllysine; alternate. Residues K223 and K230 each carry the N6-succinyllysine; alternate modification. Position 243 is an N6-succinyllysine (K243). An N6-acetyllysine mark is found at K251 and K257. CoA is bound by residues 258 to 260 and K263; that span reads RVD. Residue K263 is modified to N6-acetyllysine; alternate. K263 is modified (N6-succinyllysine; alternate). Residues K266 and K268 each carry the N6-succinyllysine modification. K273 is subject to N6-acetyllysine. The K(+) site is built by A280, A281, and A283. CoA is bound at residue S284. Position 338 is an N6-acetyllysine (K338). V381 lines the K(+) pocket. The Proton donor/acceptor role is filled by C413.

The protein belongs to the thiolase-like superfamily. Thiolase family. Homotetramer. Post-translationally, succinylation at Lys-268, adjacent to a coenzyme A binding site. Desuccinylated by SIRT5.

It is found in the mitochondrion. It carries out the reaction 2 acetyl-CoA = acetoacetyl-CoA + CoA. The catalysed reaction is propanoyl-CoA + acetyl-CoA = 2-methyl-3-oxobutanoyl-CoA + CoA. The protein operates within lipid metabolism; fatty acid beta-oxidation. Activated by potassium ions, but not sodium ions. Functionally, this is one of the enzymes that catalyzes the last step of the mitochondrial beta-oxidation pathway, an aerobic process breaking down fatty acids into acetyl-CoA. Using free coenzyme A/CoA, catalyzes the thiolytic cleavage of medium- to long-chain 3-oxoacyl-CoAs into acetyl-CoA and a fatty acyl-CoA shortened by two carbon atoms. The activity of the enzyme is reversible and it can also catalyze the condensation of two acetyl-CoA molecules into acetoacetyl-CoA. Thereby, it plays a major role in ketone body metabolism. The chain is Acetyl-CoA acetyltransferase, mitochondrial (ACAT1) from Homo sapiens (Human).